A 167-amino-acid polypeptide reads, in one-letter code: Protein-export protein SecB (167 aa).

The protein belongs to the SecB family. As to quaternary structure, homotetramer, a dimer of dimers. One homotetramer interacts with 1 SecA dimer.

Its subcellular location is the cytoplasm. In terms of biological role, one of the proteins required for the normal export of preproteins out of the cell cytoplasm. It is a molecular chaperone that binds to a subset of precursor proteins, maintaining them in a translocation-competent state. It also specifically binds to its receptor SecA. The sequence is that of Protein-export protein SecB from Cellvibrio japonicus (strain Ueda107) (Pseudomonas fluorescens subsp. cellulosa).